A 46-amino-acid chain; its full sequence is U1-plectoxin-Pt1f (46 aa).

Cystine bridges form between C4/C18, C11/C24, C17/C35, C21/C44, and C26/C33.

Belongs to the neurotoxin 02 (plectoxin) family. 02 (plectoxin) subfamily. In terms of tissue distribution, expressed by the venom gland.

The protein localises to the secreted. In terms of biological role, potent toxin that may paralyze and/or kill insect pests such as H.virescens (lepidoptera), S.exigua (beet armyworm) and M.sexta (tobacco hornworm). The chain is U1-plectoxin-Pt1f from Plectreurys tristis (Spider).